A 478-amino-acid polypeptide reads, in one-letter code: Proton-coupled amino acid transporter 2 (478 aa).

Composition is skewed to polar residues over residues 1-14 (MSVT…QVAT) and 26-37 (KLQSQDPSPANG). Positions 1-46 (MSVTKSARSPQVATPLNLDLPESAKKLQSQDPSPANGSSSESSKKT) are disordered. Topologically, residues 1–53 (MSVTKSARSPQVATPLNLDLPESAKKLQSQDPSPANGSSSESSKKTKGITGFQ) are cytoplasmic. Residues 54 to 74 (TLVHLVKGNMGTGILGLPLAV) form a helical membrane-spanning segment. At 75-76 (KN) the chain is on the extracellular side. Residues 77–97 (AGILMGPLSLLVMGLIACHCM) form a helical membrane-spanning segment. Over 98 to 143 (HILVRCAQRFCHRLNKPFMDYGDTVMHGLAFSPNAWLQNHAHWGRR) the chain is Cytoplasmic. The helical transmembrane segment at 144–164 (VVSFFLIVTQLGFCCVYIVFL) threads the bilayer. The Extracellular segment spans residues 165 to 192 (ADNLKQVVEAVNSTTISCHKNETVVLTP). The helical transmembrane segment at 193-213 (TMDSRLYMLSFLPVLGLLVFV) threads the bilayer. Residues 214–217 (RNLR) lie on the Cytoplasmic side of the membrane. The helical transmembrane segment at 218–238 (VLTIFSLLANISMLVSLVIIA) threads the bilayer. The Extracellular portion of the chain corresponds to 239 to 259 (QYIIQEIPDASQLPLVASWKT). The chain crosses the membrane as a helical span at residues 260–280 (YPLFFGTAIFSFESIGVVLPL). Residues 281–292 (ENKMKDARGFPT) are Cytoplasmic-facing. Residues 293–313 (ILSLGMSIITTLYIAIGALGY) traverse the membrane as a helical segment. Topologically, residues 314-340 (LRFGDDIKASITLNLPNCWLYQSVKLL) are extracellular. Residues 341–361 (YVVGILCTYALQFYVPAEIII) traverse the membrane as a helical segment. Over 362–374 (PLAVSQVSKRWAL) the chain is Cytoplasmic. The chain crosses the membrane as a helical span at residues 375–395 (PVDLSIRLALVCLTCMLAILI). Residues 396–399 (PRLD) lie on the Extracellular side of the membrane. Residues 400 to 420 (LVLSLVGSVSSSALALIIPPL) traverse the membrane as a helical segment. At 421–441 (LEVVTYYGEGISPLTVTKDAL) the chain is on the cytoplasmic side. The helical transmembrane segment at 442-462 (ISILGFMGFVVGTYQALDELI) threads the bilayer. Residues 463–478 (KSGNSPALSNSTMFIQ) lie on the Extracellular side of the membrane.

Belongs to the amino acid/polyamine transporter 2 family. In terms of tissue distribution, expressed in spinal cord, brain, testis, lung, heart, colon, spleen, kidney and muscle. Found in neuronal cell bodies in the anterior horn, in spinal cord brain stem, cerebellum, hippocampus, hypothalamus, rhinencephalon, cerebral cortex, and olfactory bulb in the brain. Also expressed in bone and fat tissues.

The protein localises to the cell membrane. It localises to the endoplasmic reticulum membrane. Its subcellular location is the recycling endosome membrane. The enzyme catalyses glycine(in) + H(+)(in) = glycine(out) + H(+)(out). It carries out the reaction L-alanine(in) + H(+)(in) = L-alanine(out) + H(+)(out). The catalysed reaction is D-alanine(in) + H(+)(in) = D-alanine(out) + H(+)(out). It catalyses the reaction L-proline(out) + H(+)(out) = L-proline(in) + H(+)(in). The enzyme catalyses D-proline(out) + H(+)(out) = D-proline(in) + H(+)(in). It carries out the reaction 4-hydroxy-L-proline(in) + H(+)(in) = 4-hydroxy-L-proline(out) + H(+)(out). The catalysed reaction is L-serine(in) + H(+)(in) = L-serine(out) + H(+)(out). It catalyses the reaction D-serine(out) + H(+)(out) = D-serine(in) + H(+)(in). The enzyme catalyses beta-alanine(in) + H(+)(in) = beta-alanine(out) + H(+)(out). It carries out the reaction 4-aminobutanoate(in) + H(+)(in) = 4-aminobutanoate(out) + H(+)(out). The catalysed reaction is sarcosine(in) + H(+)(in) = sarcosine(out) + H(+)(out). It catalyses the reaction N,N-dimethylglycine(in) + H(+)(in) = N,N-dimethylglycine(out) + H(+)(out). Functionally, electrogenic proton/amino acid symporter with a high selectivity for the small side chains amino acids glycine, alanine and proline, where both L- and D-enantiomers are transported. Extension of the backbone length, as in beta-alanine and 4-aminobutanoate or methylation of the amino group, as in sarcosine and N,N-dimethylglycine, are also tolerated but decrease transport efficiency. A free carboxyl group is preferred. The protein is Proton-coupled amino acid transporter 2 of Mus musculus (Mouse).